The sequence spans 106 residues: uncharacterized protein (106 aa).

Positions 1 to 46 are disordered; the sequence is MPQGGTPCRRARRAVRPERPTSPEGVFCVGGGAPGGPPDTTNTVSA.

This is an uncharacterized protein from Gracula (BFDV).